The sequence spans 480 residues: Aromatic-L-amino-acid decarboxylase (480 aa).

M1 is subject to N-acetylmethionine. 2 consecutive repeat copies span residues 58 to 115 (RDIE…TELE) and 118 to 178 (MMDW…TQAA). The segment at 58 to 178 (RDIEKIIMPG…AASPELTQAA (121 aa)) is 2 X approximate tandem repeats. T82 contributes to the substrate binding site. The pyridoxal 5'-phosphate site is built by A148 and S149. H192 contacts substrate. Positions 246 and 300 each coordinate pyridoxal 5'-phosphate. An N6-(pyridoxal phosphate)lysine modification is found at K303.

This sequence belongs to the group II decarboxylase family. In terms of assembly, homodimer. Requires pyridoxal 5'-phosphate as cofactor.

The catalysed reaction is L-dopa + H(+) = dopamine + CO2. The enzyme catalyses 5-hydroxy-L-tryptophan + H(+) = serotonin + CO2. It functions in the pathway catecholamine biosynthesis; dopamine biosynthesis; dopamine from L-tyrosine: step 2/2. Its function is as follows. Catalyzes the decarboxylation of L-3,4-dihydroxyphenylalanine (DOPA) to dopamine and L-5-hydroxytryptophan to serotonin. This is Aromatic-L-amino-acid decarboxylase from Rattus norvegicus (Rat).